Here is a 223-residue protein sequence, read N- to C-terminus: Octanoyltransferase (223 aa).

The 176-residue stretch at 32 to 207 (DETPDEIWLV…HFAHHLAITD (176 aa)) folds into the BPL/LPL catalytic domain. Residues 71 to 78 (RGGQVTYH), 138 to 140 (SLG), and 151 to 153 (GLA) contribute to the substrate site. Catalysis depends on cysteine 169, which acts as the Acyl-thioester intermediate.

This sequence belongs to the LipB family.

The protein localises to the cytoplasm. It catalyses the reaction octanoyl-[ACP] + L-lysyl-[protein] = N(6)-octanoyl-L-lysyl-[protein] + holo-[ACP] + H(+). Its pathway is protein modification; protein lipoylation via endogenous pathway; protein N(6)-(lipoyl)lysine from octanoyl-[acyl-carrier-protein]: step 1/2. Functionally, catalyzes the transfer of endogenously produced octanoic acid from octanoyl-acyl-carrier-protein onto the lipoyl domains of lipoate-dependent enzymes. Lipoyl-ACP can also act as a substrate although octanoyl-ACP is likely to be the physiological substrate. This is Octanoyltransferase from Erwinia tasmaniensis (strain DSM 17950 / CFBP 7177 / CIP 109463 / NCPPB 4357 / Et1/99).